The primary structure comprises 652 residues: Phosphatidylinositol-binding clathrin assembly protein (652 aa).

Ser2 is modified (N-acetylserine). Positions 14-145 (QHSVTGSAVS…VSYRQVAFDF (132 aa)) constitute an ENTH domain. Phosphoserine occurs at positions 16 and 20. The interval 221 to 294 (KYFDMKKNQC…LEGKKIKDST (74 aa)) is interaction with PIMREG. Lys238 participates in a covalent cross-link: Glycyl lysine isopeptide (Lys-Gly) (interchain with G-Cter in SUMO2). Phosphoserine is present on residues Ser303 and Ser315. A disordered region spans residues 559–580 (KNDVNWSQPGEKKLTGGSNWQP).

It belongs to the PICALM/SNAP91 family. As to quaternary structure, binds to clathrin; involves primarily the C-terminal sequences, but the full-length protein is required for full binding capacity. Binds phosphatidylinositol 4,5- bisphosphate. Interacts with PIMREG; this interaction may change the subcellular location into the nucleus. Interacts with AP2A1 (via its alpha-appendage domain). Interacts (via N-terminus) with VAMP2; VAMP3; VAMP7 and VAMP8 (Via N-terminus). Interacts with LC3/MAP1LC3A. Expressed in all tissues examined.

The protein resides in the cell membrane. It localises to the membrane. The protein localises to the clathrin-coated pit. It is found in the golgi apparatus. Its subcellular location is the cytoplasmic vesicle. The protein resides in the clathrin-coated vesicle. It localises to the nucleus. Its function is as follows. Cytoplasmic adapter protein that plays a critical role in clathrin-mediated endocytosis which is important in processes such as internalization of cell receptors, synaptic transmission or removal of apoptotic cells. Recruits AP-2 and attaches clathrin triskelions to the cytoplasmic side of plasma membrane leading to clathrin-coated vesicles (CCVs) assembly. Furthermore, regulates clathrin-coated vesicle size and maturation by directly sensing and driving membrane curvature. In addition to binding to clathrin, mediates the endocytosis of small R-SNARES (Soluble NSF Attachment Protein REceptors) between plasma membranes and endosomes including VAMP2, VAMP3, VAMP4, VAMP7 or VAMP8. In turn, PICALM-dependent SNARE endocytosis is required for the formation and maturation of autophagic precursors. Modulates thereby autophagy and the turnover of autophagy substrates such as MAPT/TAU or amyloid precursor protein cleaved C-terminal fragment (APP-CTF). The chain is Phosphatidylinositol-binding clathrin assembly protein (PICALM) from Homo sapiens (Human).